Here is a 394-residue protein sequence, read N- to C-terminus: RNA-binding motif protein, X-linked-like-2 (394 aa).

In terms of domain architecture, RRM spans 8–86; the sequence is GKLFIGGLNL…KAIKVAQATK (79 aa). The segment covering 67 to 78 has biased composition (basic and acidic residues); sequence RDMNGKSLDGKA. The disordered stretch occupies residues 67–394; that stretch reads RDMNGKSLDG…MERGGGRSRY (328 aa). Positions 150-165 are enriched in pro residues; that stretch reads RGPPPPPRRAGPPPKR. Composition is skewed to basic and acidic residues over residues 196 to 231 and 239 to 285; these read PRRE…REPR and EYTH…REPF. A compositionally biased stretch (low complexity) spans 321-333; it reads YSGGRDSYSSSYG. 2 stretches are compositionally biased toward basic and acidic residues: residues 334 to 350 and 383 to 394; these read RSDR…RPDR and GRMERGGGRSRY.

The protein resides in the nucleus. The sequence is that of RNA-binding motif protein, X-linked-like-2 (RBMXL2) from Macaca fascicularis (Crab-eating macaque).